The sequence spans 123 residues: Protein Wnt-3 (123 aa).

Residue serine 1 is the site of O-palmitoleoyl serine; by PORCN attachment. An intrachain disulfide couples cysteine 89 to cysteine 104. N-linked (GlcNAc...) asparagine glycosylation occurs at asparagine 90.

It belongs to the Wnt family. In terms of processing, palmitoleoylation is required for efficient binding to frizzled receptors. Depalmitoleoylation leads to Wnt signaling pathway inhibition.

The protein resides in the secreted. Its subcellular location is the extracellular space. It localises to the extracellular matrix. Functionally, ligand for members of the frizzled family of seven transmembrane receptors. Functions in the canonical Wnt signaling pathway that results in activation of transcription factors of the TCF/LEF family. Required for normal embryonic development. This chain is Protein Wnt-3 (WNT-3), found in Eptatretus stoutii (Pacific hagfish).